A 115-amino-acid polypeptide reads, in one-letter code: Large ribosomal subunit protein bL19 (115 aa).

This sequence belongs to the bacterial ribosomal protein bL19 family.

Functionally, this protein is located at the 30S-50S ribosomal subunit interface and may play a role in the structure and function of the aminoacyl-tRNA binding site. The polypeptide is Large ribosomal subunit protein bL19 (Nitratidesulfovibrio vulgaris (strain ATCC 29579 / DSM 644 / CCUG 34227 / NCIMB 8303 / VKM B-1760 / Hildenborough) (Desulfovibrio vulgaris)).